We begin with the raw amino-acid sequence, 374 residues long: Chaperone protein DnaJ (374 aa).

Positions 5-70 (DFYEILGVSK…EKRSAYDRMG (66 aa)) constitute a J domain. The CR-type zinc-finger motif lies at 133–211 (GCKKEISFTA…CHGNGVKDKS (79 aa)). Positions 146, 149, 163, 166, 185, 188, 199, and 202 each coordinate Zn(2+). CXXCXGXG motif repeat units follow at residues 146–153 (CDTCDGKG), 163–170 (CQTCHGQG), 185–192 (CPHCGGTG), and 199–206 (CSDCHGNG).

This sequence belongs to the DnaJ family. Homodimer. Zn(2+) serves as cofactor.

Its subcellular location is the cytoplasm. Functionally, participates actively in the response to hyperosmotic and heat shock by preventing the aggregation of stress-denatured proteins and by disaggregating proteins, also in an autonomous, DnaK-independent fashion. Unfolded proteins bind initially to DnaJ; upon interaction with the DnaJ-bound protein, DnaK hydrolyzes its bound ATP, resulting in the formation of a stable complex. GrpE releases ADP from DnaK; ATP binding to DnaK triggers the release of the substrate protein, thus completing the reaction cycle. Several rounds of ATP-dependent interactions between DnaJ, DnaK and GrpE are required for fully efficient folding. Also involved, together with DnaK and GrpE, in the DNA replication of plasmids through activation of initiation proteins. In Psychrobacter arcticus (strain DSM 17307 / VKM B-2377 / 273-4), this protein is Chaperone protein DnaJ.